The primary structure comprises 183 residues: ADP-ribosylation factor-like protein 5 (183 aa).

GTP is bound by residues 27-34, 70-74, and 129-132; these read GLNAAGKT, DLGGQ, and NKQD.

The protein belongs to the small GTPase superfamily. Arf family.

May bind and exchange GTP and GDP. This Dictyostelium discoideum (Social amoeba) protein is ADP-ribosylation factor-like protein 5 (arl5).